Consider the following 165-residue polypeptide: NADPH-dependent 7-cyano-7-deazaguanine reductase (165 aa).

The active-site Thioimide intermediate is Cys56. Asp63 acts as the Proton donor in catalysis. Substrate-binding positions include 78–80 (VES) and 97–98 (HE).

Belongs to the GTP cyclohydrolase I family. QueF type 1 subfamily.

The protein resides in the cytoplasm. It carries out the reaction 7-aminomethyl-7-carbaguanine + 2 NADP(+) = 7-cyano-7-deazaguanine + 2 NADPH + 3 H(+). The protein operates within tRNA modification; tRNA-queuosine biosynthesis. Is totally inhibited by 4-aminobenzylcyanide in vitro. Functionally, catalyzes the NADPH-dependent reduction of 7-cyano-7-deazaguanine (preQ0) to 7-aminomethyl-7-deazaguanine (preQ1), a late step in the queuosine pathway. Is highly specific for its natural substrate preQ0, since it cannot use various aliphatic, aromatic and heterocyclic nitriles, although it can reduce the substrate analog 5-cyanopyrrolo[2,3-d]pyrimidin-4-one with lesser efficiency. The protein is NADPH-dependent 7-cyano-7-deazaguanine reductase of Geobacillus kaustophilus (strain HTA426).